The primary structure comprises 299 residues: Palmitoyltransferase ZDHHC3 (299 aa).

The Cytoplasmic segment spans residues 1-47; that stretch reads MMLIPTHHFRNIERKPEYLQPEKCVPPPYPGPVGTMWFIRDGCGIAC. Y18 is modified (phosphotyrosine). Residues 48–68 traverse the membrane as a helical segment; that stretch reads AIVTWFLVLYAEFVVLFVMLI. Topologically, residues 69–72 are extracellular; that stretch reads PSRD. A helical transmembrane segment spans residues 73-93; that stretch reads YVYSIINGIVFNLLAFLALAS. Residues 94 to 171 are Cytoplasmic-facing; it reads HCRAMLTDPG…NCVGENNQKY (78 aa). The DHHC domain occupies 127–177; sequence YKCPKCCSIKPDRAHHCSVCKRCIRKMDHHCPWVNNCVGENNQKYFVLFTM. A lipid anchor (S-palmitoyl cysteine) is attached at C146. The active-site S-palmitoyl cysteine intermediate is C157. A helical transmembrane segment spans residues 172-192; that stretch reads FVLFTMYIALISLHALIMVGF. The Extracellular portion of the chain corresponds to 193–214; that stretch reads HFLHCFEEDWTKCSSFSPPTTV. The helical transmembrane segment at 215–235 threads the bilayer; that stretch reads ILLILLCFEGLLFLIFTSVMF. The Cytoplasmic segment spans residues 236-299; sequence GTQVHSICTD…GKADPYQYVV (64 aa).

It belongs to the DHHC palmitoyltransferase family. In terms of assembly, monomer. Homooligomers. The monomeric form has a higher catalytic activity. Forms heterooligomers with ZDHHC7. Interacts with TNFRSF10A. Autopalmitoylated. In terms of processing, phosphorylation by FGFR1 and SRC probably regulates the palmitoyltransferase activity. In terms of tissue distribution, widely expressed with significant expression in heart, lung, liver, skeletal muscle, kidney, testis, thymus, small intestine and leukocyte.

It localises to the golgi apparatus membrane. It carries out the reaction L-cysteinyl-[protein] + hexadecanoyl-CoA = S-hexadecanoyl-L-cysteinyl-[protein] + CoA. It catalyses the reaction L-cysteinyl-[protein] + tetradecanoyl-CoA = S-tetradecanoyl-L-cysteinyl-[protein] + CoA. The enzyme catalyses L-cysteinyl-[protein] + octadecanoyl-CoA = S-octadecanoyl-L-cysteinyl-[protein] + CoA. Golgi-localized palmitoyltransferase that catalyzes the addition of palmitate onto various protein substrates. Has no stringent fatty acid selectivity and in addition to palmitate can also transfer onto target proteins myristate from tetradecanoyl-CoA and stearate from octadecanoyl-CoA. Plays an important role in G protein-coupled receptor signaling pathways involving GNAQ and potentially other heterotrimeric G proteins by regulating their dynamic association with the plasma membrane. Palmitoylates ITGA6 and ITGB4, thereby regulating the alpha-6/beta-4 integrin localization, expression and function in cell adhesion to laminin. Plays a role in the TRAIL-activated apoptotic signaling pathway most probably through the palmitoylation and localization to the plasma membrane of TNFRSF10A. In the brain, by palmitoylating the gamma subunit GABRG2 of GABA(A) receptors and regulating their postsynaptic accumulation, plays a role in synaptic GABAergic inhibitory function and GABAergic innervation. Palmitoylates the neuronal protein GAP43 which is also involved in the formation of GABAergic synapses. Palmitoylates NCDN thereby regulating its association with endosome membranes. Probably palmitoylates PRCD and is involved in its proper localization within the photoreceptor. Could mediate the palmitoylation of NCAM1 and regulate neurite outgrowth. Could palmitoylate DNAJC5 and regulate its localization to Golgi membranes. Also constitutively palmitoylates DLG4. May also palmitoylate SNAP25. Could palmitoylate the glutamate receptors GRIA1 and GRIA2 but this has not been confirmed in vivo. Could also palmitoylate the D(2) dopamine receptor DRD2. May also palmitoylate LAMTOR1, promoting its localization to lysosomal membranes. Palmitoylates the Toll-like receptor 9/TLR9 in the Golgi and thereby regulates TLR9 trafficking to endosomes. May palmitoylate CALHM1 and CALHM3 subunits of gustatory voltage-gated ion channels and modulate channel gating and kinetics. In terms of biological role, may also function as a calcium transporter. The protein is Palmitoyltransferase ZDHHC3 of Homo sapiens (Human).